The primary structure comprises 511 residues: MATVQEKAAALNLSALHSPAHRPPGFSVAQKPFGATYVWSSIINTLQTQVEVKKRRHRLKRHNDCFVGSEAVDVIFSHLIQNKYFGDVDIPRAKVVRVCQALMDYKVFEAVPTKVFGKDKKPTFEDSSCSLYRFTTIPNQDSQLGKENKLYSPARYADALFKSSDIRSASLEDLWENLSLKPANSPHVNISATLSPQVINEVWQEETIGRLLQLVDLPLLDSLLKQQEAVPKIPQPKRQSTMVNSSNYLDRGILKAYSDSQEDEWLSAAIDCLEYLPDQMVVEISRSFPEQPDRTDLVKELLFDAIGRYYSSREPLLNHLSDVHNGIAELLVNGKTEIALEATQLLLKLLDFQNREEFRRLLYFMAVAANPSEFKLQKESDNRMVVKRIFSKAIVDNKNLSKGKTDLLVLFLMDHQKDVFKIPGTLHKIVSVKLMAIQNGRDPNRDAGYIYCQRIDQRDYSNNTEKTTKDELLNLLKTLDEDSKLSAKEKKKLLGQFYKCHPDIFIEHFGD.

The DEP domain maps to 46–136 (LQTQVEVKKR…SSCSLYRFTT (91 aa)).

It belongs to the DEPDC7 family. Expressed in liver.

The polypeptide is DEP domain-containing protein 7 (DEPDC7) (Homo sapiens (Human)).